The following is a 196-amino-acid chain: Glycerol-3-phosphate acyltransferase (196 aa).

Helical transmembrane passes span 5–25 (VYLLIVFAYLLGSVSSAIIFC), 53–73 (FSALGVLLFDILKGGLPVLLA), 80–100 (PSEIGLIALAACLGHIFPLFF), 107–127 (GVATAFGALLSISFAASAAGL), 130–150 (WLIVFLLFGYSSLSAVITALI), and 153–173 (FYIWWFLPEFTFPVALVCCLL).

Belongs to the PlsY family. As to quaternary structure, probably interacts with PlsX.

It localises to the cell inner membrane. The catalysed reaction is an acyl phosphate + sn-glycerol 3-phosphate = a 1-acyl-sn-glycero-3-phosphate + phosphate. The protein operates within lipid metabolism; phospholipid metabolism. Catalyzes the transfer of an acyl group from acyl-phosphate (acyl-PO(4)) to glycerol-3-phosphate (G3P) to form lysophosphatidic acid (LPA). This enzyme utilizes acyl-phosphate as fatty acyl donor, but not acyl-CoA or acyl-ACP. The polypeptide is Glycerol-3-phosphate acyltransferase (Actinobacillus pleuropneumoniae serotype 7 (strain AP76)).